Consider the following 1063-residue polypeptide: NAD-specific glutamate dehydrogenase (1063 aa).

The protein belongs to the Glu/Leu/Phe/Val dehydrogenases family. Highly divergent. As to quaternary structure, homotetramer.

The catalysed reaction is L-glutamate + NAD(+) + H2O = 2-oxoglutarate + NH4(+) + NADH + H(+). Allosterically activated by NADP(+). The polypeptide is NAD-specific glutamate dehydrogenase (Achlya klebsiana).